The chain runs to 910 residues: Schlafen family member 8 (910 aa).

Residues 1–354 (METHPSLAVK…WVRMMVDFGP (354 aa)) are n'-domain region. Active-site residues include glutamate 205 and glutamate 210. The Zn(2+) site is built by histidine 280, cysteine 282, and cysteine 319. 599 to 606 (GLPGSGKT) provides a ligand contact to ATP.

The protein belongs to the Schlafen family. Subgroup III subfamily. The cofactor is Mg(2+). As to expression, in T-cells, expressed at relatively constant levels during development: expressed in immature CD3(-)CD4(-)CD8(-) T-cells (DN stage), in CD4(+)CD8(+) double-positive stage (DP) and mature CD4(+) or CD8(+) thymocytes. Expression is slightly reduced at the DP stage.

The protein localises to the cytoplasm. Functionally, endoribonuclease that cleaves tRNAs and rRNAs. Cleaves tRNAs 11 nucleotides from the 3'-terminus at the acceptor stem. May be involved in immune system via regulation of inflammation. The protein is Schlafen family member 8 of Mus musculus (Mouse).